Here is a 154-residue protein sequence, read N- to C-terminus: Ribonuclease H (154 aa).

The 142-residue stretch at 7–148 folds into the RNase H type-1 domain; that stretch reads KPETVEIYTD…ADALAREGIA (142 aa). Residues D16, E54, D76, and D140 each coordinate Mg(2+).

The protein belongs to the RNase H family. Monomer. Mg(2+) is required as a cofactor.

It localises to the cytoplasm. The catalysed reaction is Endonucleolytic cleavage to 5'-phosphomonoester.. Endonuclease that specifically degrades the RNA of RNA-DNA hybrids. The sequence is that of Ribonuclease H from Paramagnetospirillum magneticum (strain ATCC 700264 / AMB-1) (Magnetospirillum magneticum).